Here is a 130-residue protein sequence, read N- to C-terminus: Small ribosomal subunit protein uS9 (130 aa).

This sequence belongs to the universal ribosomal protein uS9 family.

The chain is Small ribosomal subunit protein uS9 from Anoxybacillus flavithermus (strain DSM 21510 / WK1).